Here is a 192-residue protein sequence, read N- to C-terminus: Phosphoheptose isomerase (192 aa).

An SIS domain is found at leucine 35–asparagine 192. Asparagine 50 to glycine 52 contacts substrate. Zn(2+) is bound by residues histidine 59 and glutamate 63. Substrate is bound by residues glutamate 63, asparagine 92–aspartate 93, serine 118–serine 120, serine 123, and glutamine 170. Glutamine 170 and histidine 178 together coordinate Zn(2+).

Belongs to the SIS family. GmhA subfamily. Homotetramer. The cofactor is Zn(2+).

It localises to the cytoplasm. The catalysed reaction is 2 D-sedoheptulose 7-phosphate = D-glycero-alpha-D-manno-heptose 7-phosphate + D-glycero-beta-D-manno-heptose 7-phosphate. It functions in the pathway carbohydrate biosynthesis; D-glycero-D-manno-heptose 7-phosphate biosynthesis; D-glycero-alpha-D-manno-heptose 7-phosphate and D-glycero-beta-D-manno-heptose 7-phosphate from sedoheptulose 7-phosphate: step 1/1. Its pathway is bacterial outer membrane biogenesis; LPS core biosynthesis. In terms of biological role, catalyzes the isomerization of sedoheptulose 7-phosphate in D-glycero-D-manno-heptose 7-phosphate. This chain is Phosphoheptose isomerase, found in Helicobacter pylori (strain ATCC 700392 / 26695) (Campylobacter pylori).